The primary structure comprises 152 residues: Endoribonuclease YbeY (152 aa).

3 residues coordinate Zn(2+): histidine 118, histidine 122, and histidine 128.

This sequence belongs to the endoribonuclease YbeY family. Zn(2+) serves as cofactor.

The protein localises to the cytoplasm. Its function is as follows. Single strand-specific metallo-endoribonuclease involved in late-stage 70S ribosome quality control and in maturation of the 3' terminus of the 16S rRNA. This Pelotomaculum thermopropionicum (strain DSM 13744 / JCM 10971 / SI) protein is Endoribonuclease YbeY.